We begin with the raw amino-acid sequence, 299 residues long: Pyridoxal 5'-phosphate synthase subunit PdxS (299 aa).

A D-ribose 5-phosphate-binding site is contributed by Asp-29. Residue Lys-86 is the Schiff-base intermediate with D-ribose 5-phosphate of the active site. Gly-158 lines the D-ribose 5-phosphate pocket. Arg-170 serves as a coordination point for D-glyceraldehyde 3-phosphate. D-ribose 5-phosphate contacts are provided by residues Gly-219 and 240-241 (GS).

Belongs to the PdxS/SNZ family. In terms of assembly, in the presence of PdxT, forms a dodecamer of heterodimers.

The enzyme catalyses aldehydo-D-ribose 5-phosphate + D-glyceraldehyde 3-phosphate + L-glutamine = pyridoxal 5'-phosphate + L-glutamate + phosphate + 3 H2O + H(+). Its pathway is cofactor biosynthesis; pyridoxal 5'-phosphate biosynthesis. Functionally, catalyzes the formation of pyridoxal 5'-phosphate from ribose 5-phosphate (RBP), glyceraldehyde 3-phosphate (G3P) and ammonia. The ammonia is provided by the PdxT subunit. Can also use ribulose 5-phosphate and dihydroxyacetone phosphate as substrates, resulting from enzyme-catalyzed isomerization of RBP and G3P, respectively. The sequence is that of Pyridoxal 5'-phosphate synthase subunit PdxS from Mycobacterium bovis (strain ATCC BAA-935 / AF2122/97).